Consider the following 438-residue polypeptide: Carboxypeptidase A6 (438 aa).

Positions 1 to 30 are cleaved as a signal peptide; that stretch reads MNFLGNPRSHTAAFLPVCWLLLNILKPGHC. The propeptide at 31 to 129 is activation peptide; sequence HSYDNRYAGD…NSLQTQRNRR (99 aa). Residues N89 and N153 are each glycosylated (N-linked (GlcNAc...) asparagine). The 296-residue stretch at 138–433 folds into the Peptidase M14 domain; that stretch reads VYHSLEDIQS…LAVKNITMHL (296 aa). Zn(2+) contacts are provided by H197 and E200. Residues 197–200, R255, and 272–273 contribute to the substrate site; these read HARE and NR. A disulfide bond links C266 and C289. H325 is a Zn(2+) binding site. Substrate is bound at residue 326–327; it reads AY. The N-linked (GlcNAc...) asparagine glycan is linked to N344. Position 377 (Y377) interacts with substrate. E399 functions as the Proton donor/acceptor in the catalytic mechanism. N-linked (GlcNAc...) asparagine glycosylation occurs at N428.

It belongs to the peptidase M14 family. It depends on Zn(2+) as a cofactor. As to expression, in brain, highly expressed in the olfactory bulb with lower levels in other regions including cerebral cortex, hippocampus, hypothalamus, striatum and medulla. Within the olfactory bulb, highest levels occur in the mitral and granular layers with lower levels in the internal and external plexiform layers. Moderate levels are found in the epididymis with low levels in colon and spleen. Not detected in adrenal, liver, lung, ovary or testis. At embryonic day 14.5, enriched in eye, ear, osteoblasts, stomach, skin, dorsal root ganglia and throughout the CNS.

The protein localises to the secreted. The protein resides in the extracellular space. It is found in the extracellular matrix. In terms of biological role, may be involved in the proteolytic inactivation of enkephalins and neurotensin in some brain areas. May convert inactive angiotensin I into the biologically active angiotensin II. Releases a C-terminal amino acid, with preference for large hydrophobic C-terminal amino acids and shows only very weak activity toward small amino acids and histidine. The polypeptide is Carboxypeptidase A6 (Cpa6) (Mus musculus (Mouse)).